A 209-amino-acid chain; its full sequence is Redox-sensing transcriptional repressor Rex (209 aa).

The segment at residues Val16–Phe55 is a DNA-binding region (H-T-H motif). Position 90 to 95 (Gly90 to Gly95) interacts with NAD(+).

It belongs to the transcriptional regulatory Rex family. In terms of assembly, homodimer.

The protein localises to the cytoplasm. Functionally, modulates transcription in response to changes in cellular NADH/NAD(+) redox state. The sequence is that of Redox-sensing transcriptional repressor Rex from Maridesulfovibrio salexigens (strain ATCC 14822 / DSM 2638 / NCIMB 8403 / VKM B-1763) (Desulfovibrio salexigens).